Consider the following 109-residue polypeptide: Small ribosomal subunit protein uS17 (109 aa).

This sequence belongs to the universal ribosomal protein uS17 family. As to quaternary structure, part of the 30S ribosomal subunit.

In terms of biological role, one of the primary rRNA binding proteins, it binds specifically to the 5'-end of 16S ribosomal RNA. This chain is Small ribosomal subunit protein uS17, found in Methanococcus maripaludis (strain DSM 14266 / JCM 13030 / NBRC 101832 / S2 / LL).